The following is a 356-amino-acid chain: Protein pelota homolog (356 aa).

It belongs to the eukaryotic release factor 1 family. Pelota subfamily. As to quaternary structure, monomer. It depends on a divalent metal cation as a cofactor.

It localises to the cytoplasm. Its function is as follows. May function in recognizing stalled ribosomes, interact with stem-loop structures in stalled mRNA molecules, and effect endonucleolytic cleavage of the mRNA. May play a role in the release non-functional ribosomes and degradation of damaged mRNAs. Has endoribonuclease activity. This is Protein pelota homolog from Pyrococcus abyssi (strain GE5 / Orsay).